A 317-amino-acid polypeptide reads, in one-letter code: Small glutamine-rich tetratricopeptide repeat-containing protein 2 (317 aa).

4 TPR repeats span residues 14–48 (LKQA…KPEE), 83–116 (AEKL…DPTS), 118–150 (VYYS…DPHH), and 151–184 (ARAF…DPNN). The segment covering 198–215 (LNQPSDSSATSGADQART) has biased composition (polar residues). Disordered regions lie at residues 198-224 (LNQP…PDLG) and 298-317 (MNNN…PPPQ).

The protein belongs to the SGT family.

It is found in the cytoplasm. The protein localises to the nucleus. Its function is as follows. Co-chaperone that binds to the molecular chaperone Hsp70 and regulates Hsp70 ATPase activity. This is Small glutamine-rich tetratricopeptide repeat-containing protein 2 (sgt2) from Schizosaccharomyces pombe (strain 972 / ATCC 24843) (Fission yeast).